A 753-amino-acid polypeptide reads, in one-letter code: Rsm22-cox11 tandem protein 1, mitochondrial (753 aa).

A mitochondrion-targeting transit peptide spans 1 to 39; the sequence is MPILTCRYKILFLYNLRNCFTFQNQRCLIPYGTTTTIRW. The [4Fe-4S] cluster site is built by Cys323, Cys329, Cys342, and Cys430. The chain crosses the membrane as a helical span at residues 571–591; it reads IYYLVAISIFALGLTYAAVPL. At 592–753 the chain is on the mitochondrial intermembrane side; that stretch reads YRLFCSKTGY…TNGNLLTKLN (162 aa).

In the N-terminal section; belongs to the methyltransferase superfamily. Rsm22 family. It in the C-terminal section; belongs to the COX11/CtaG family. As to quaternary structure, associates with the mitochondrial ribosome (mitoribosome). Only transiently interacts with the mitoribosome. In terms of processing, specific enzymatic cleavages in vivo by mitochondrial processing peptidase (MPP) yield mature proteins including rsm22-1 and cox11-1.

Its subcellular location is the mitochondrion. The protein resides in the mitochondrion inner membrane. Functionally, mitochondrial ribosome (mitoribosome) assembly factor. Binds at the interface of the head and body domains of the mitochondrial small ribosomal subunit (mt-SSU), occluding the mRNA channel and preventing compaction of the head domain towards the body. Probable inactive methyltransferase: retains the characteristic folding and ability to bind S-adenosyl-L-methionine, but it probably lost its methyltransferase activity. Its function is as follows. Exerts its effect at some terminal stage of cytochrome c oxidase synthesis, probably by being involved in the insertion of the copper B into subunit I. The sequence is that of Rsm22-cox11 tandem protein 1, mitochondrial (cox1101) from Schizosaccharomyces pombe (strain 972 / ATCC 24843) (Fission yeast).